A 103-amino-acid polypeptide reads, in one-letter code: Large ribosomal subunit protein uL24 (103 aa).

It belongs to the universal ribosomal protein uL24 family. In terms of assembly, part of the 50S ribosomal subunit.

Functionally, one of two assembly initiator proteins, it binds directly to the 5'-end of the 23S rRNA, where it nucleates assembly of the 50S subunit. In terms of biological role, one of the proteins that surrounds the polypeptide exit tunnel on the outside of the subunit. The protein is Large ribosomal subunit protein uL24 of Endomicrobium trichonymphae.